Consider the following 376-residue polypeptide: Chaperone protein DnaJ (376 aa).

In terms of domain architecture, J spans D5–G70. The CR-type zinc finger occupies G131–T209. Zn(2+)-binding residues include C144, C147, C161, C164, C183, C186, C197, and C200. CXXCXGXG motif repeat units follow at residues C144–G151, C161–G168, C183–G190, and C197–G204.

The protein belongs to the DnaJ family. In terms of assembly, homodimer. It depends on Zn(2+) as a cofactor.

Its subcellular location is the cytoplasm. Its function is as follows. Participates actively in the response to hyperosmotic and heat shock by preventing the aggregation of stress-denatured proteins and by disaggregating proteins, also in an autonomous, DnaK-independent fashion. Unfolded proteins bind initially to DnaJ; upon interaction with the DnaJ-bound protein, DnaK hydrolyzes its bound ATP, resulting in the formation of a stable complex. GrpE releases ADP from DnaK; ATP binding to DnaK triggers the release of the substrate protein, thus completing the reaction cycle. Several rounds of ATP-dependent interactions between DnaJ, DnaK and GrpE are required for fully efficient folding. Also involved, together with DnaK and GrpE, in the DNA replication of plasmids through activation of initiation proteins. The polypeptide is Chaperone protein DnaJ (Tolumonas auensis (strain DSM 9187 / NBRC 110442 / TA 4)).